Consider the following 318-residue polypeptide: Pantothenate kinase (318 aa).

Glycine 96 to serine 103 serves as a coordination point for ATP.

Belongs to the prokaryotic pantothenate kinase family.

Its subcellular location is the cytoplasm. It catalyses the reaction (R)-pantothenate + ATP = (R)-4'-phosphopantothenate + ADP + H(+). It participates in cofactor biosynthesis; coenzyme A biosynthesis; CoA from (R)-pantothenate: step 1/5. The sequence is that of Pantothenate kinase from Bradyrhizobium sp. (strain BTAi1 / ATCC BAA-1182).